A 1188-amino-acid polypeptide reads, in one-letter code: Oxysterol-binding protein homolog 1 (1188 aa).

ANK repeat units lie at residues 51–80 (VLHL…STTN), 96–125 (NGNT…INDC), and 196–225 (TGDT…DPFK). The PH domain maps to 330–379 (MSSCSLHLDSSEKLKFEIIGGNNGVIRWHLKGNHPIETNRWVWAIQGAIR). Serine 394 is subject to Phosphoserine. 2 disordered regions span residues 415-546 (ATSK…GDED) and 661-692 (QKKL…QEST). A compositionally biased stretch (polar residues) spans 424–433 (PHLSKSTLTQ). Residues 443 to 462 (TNNNNNKSNNDYDDNNNNNN) show a composition bias toward low complexity. The span at 463 to 473 (NDDDDYDDDDE) shows a compositional bias: acidic residues. Residues serine 490 and serine 500 each carry the phosphoserine modification. A compositionally biased stretch (acidic residues) spans 514–529 (PSDDEGYSEDDSDDDG). A phosphoserine mark is found at serine 678, serine 683, and serine 691. Residues threonine 692 and threonine 694 each carry the phosphothreonine modification. Serine 708 and serine 712 each carry phosphoserine. Positions 716–722 (EFFDAEE) match the FFAT motif. Residues 721 to 755 (EEAASDKKANDSEDLTTNKETPANAKPQEEAPEDE) form a disordered region. Positions 800–1174 (LWSVLKSMVG…YWKFNGEYWN (375 aa)) are OSBP-related domain (ORD). Positions 834 and 962 each coordinate ergosterol.

The protein belongs to the OSBP family. As to quaternary structure, interacts with NVJ1. Interacts with the AAA ATPase AFG2; regulates OSH1 membrane association. AFG2 is required for membrane dissociation of OSH1. Interacts with SCS2.

Its subcellular location is the golgi apparatus membrane. The protein resides in the nucleus outer membrane. It is found in the endoplasmic reticulum membrane. The protein localises to the vacuole membrane. In terms of biological role, lipid transport protein (LTP) involved in non-vesicular transfer of lipids between membranes. Functions in phosphoinositide-coupled directional transport of various lipids by carrying the lipid molecule in a hydrophobic pocket and transferring it between membranes through the cytosol. Involved in maintenance of intracellular sterol distribution and homeostasis. Involved in non-vesicular transport of ergosterol and PI(4)P at the NVJ. Binds sterol and PI4P in a mutually exclusive manner. May be involved in formation of PMN vesicles by altering the membrane lipid composition. The sequence is that of Oxysterol-binding protein homolog 1 from Saccharomyces cerevisiae (strain ATCC 204508 / S288c) (Baker's yeast).